Reading from the N-terminus, the 208-residue chain is FMN-dependent NADH:quinone oxidoreductase 3 (208 aa).

Belongs to the azoreductase type 1 family. As to quaternary structure, homodimer. FMN serves as cofactor.

It carries out the reaction 2 a quinone + NADH + H(+) = 2 a 1,4-benzosemiquinone + NAD(+). The catalysed reaction is N,N-dimethyl-1,4-phenylenediamine + anthranilate + 2 NAD(+) = 2-(4-dimethylaminophenyl)diazenylbenzoate + 2 NADH + 2 H(+). Its function is as follows. Quinone reductase that provides resistance to thiol-specific stress caused by electrophilic quinones. Also exhibits azoreductase activity. Catalyzes the reductive cleavage of the azo bond in aromatic azo compounds to the corresponding amines. This chain is FMN-dependent NADH:quinone oxidoreductase 3, found in Bacillus cereus (strain ATCC 14579 / DSM 31 / CCUG 7414 / JCM 2152 / NBRC 15305 / NCIMB 9373 / NCTC 2599 / NRRL B-3711).